We begin with the raw amino-acid sequence, 180 residues long: Dual-action ribosomal maturation protein DarP (180 aa).

This sequence belongs to the DarP family.

It is found in the cytoplasm. Its function is as follows. Member of a network of 50S ribosomal subunit biogenesis factors which assembles along the 30S-50S interface, preventing incorrect 23S rRNA structures from forming. Promotes peptidyl transferase center (PTC) maturation. The polypeptide is Dual-action ribosomal maturation protein DarP (Chromobacterium violaceum (strain ATCC 12472 / DSM 30191 / JCM 1249 / CCUG 213 / NBRC 12614 / NCIMB 9131 / NCTC 9757 / MK)).